We begin with the raw amino-acid sequence, 122 residues long: Large ribosomal subunit protein uL14 (122 aa).

It belongs to the universal ribosomal protein uL14 family. In terms of assembly, part of the 50S ribosomal subunit. Forms a cluster with proteins L3 and L19. In the 70S ribosome, L14 and L19 interact and together make contacts with the 16S rRNA in bridges B5 and B8.

Binds to 23S rRNA. Forms part of two intersubunit bridges in the 70S ribosome. The chain is Large ribosomal subunit protein uL14 from Campylobacter hominis (strain ATCC BAA-381 / DSM 21671 / CCUG 45161 / LMG 19568 / NCTC 13146 / CH001A).